A 380-amino-acid polypeptide reads, in one-letter code: 2-aminoethylphosphonate--pyruvate transaminase (380 aa).

Lys204 is modified (N6-(pyridoxal phosphate)lysine).

Belongs to the class-V pyridoxal-phosphate-dependent aminotransferase family. PhnW subfamily. Homodimer. It depends on pyridoxal 5'-phosphate as a cofactor.

The enzyme catalyses (2-aminoethyl)phosphonate + pyruvate = phosphonoacetaldehyde + L-alanine. Its function is as follows. Involved in phosphonate degradation. The sequence is that of 2-aminoethylphosphonate--pyruvate transaminase from Aeromonas hydrophila subsp. hydrophila (strain ATCC 7966 / DSM 30187 / BCRC 13018 / CCUG 14551 / JCM 1027 / KCTC 2358 / NCIMB 9240 / NCTC 8049).